Reading from the N-terminus, the 1155-residue chain is Probable translation initiation factor IF-2 (1155 aa).

A DOD-type homing endonuclease domain is found at 237-367 (FAGVMFGDGC…LSILLLRFEI (131 aa)). One can recognise a tr-type G domain in the interval 561-781 (TTETHNFIAN…VAGLAQKFLE (221 aa)). Residues 634 to 638 (DTPGH) and 688 to 691 (NKID) each bind GTP.

The protein belongs to the TRAFAC class translation factor GTPase superfamily. Classic translation factor GTPase family. IF-2 subfamily. In terms of processing, this protein undergoes a protein self splicing that involves a post-translational excision of the intervening region (intein) followed by peptide ligation.

In terms of biological role, function in general translation initiation by promoting the binding of the formylmethionine-tRNA to ribosomes. Seems to function along with eIF-2. The chain is Probable translation initiation factor IF-2 (infB) from Methanocaldococcus jannaschii (strain ATCC 43067 / DSM 2661 / JAL-1 / JCM 10045 / NBRC 100440) (Methanococcus jannaschii).